A 504-amino-acid polypeptide reads, in one-letter code: Glycine--tRNA ligase (504 aa).

R99 and E189 together coordinate substrate. ATP is bound by residues 221–223 (RNE), 231–236 (FRVREL), 306–307 (EI), and 365–368 (GVDR). Position 236–240 (236–240 (LEQME)) interacts with substrate. Position 361-365 (361-365 (EPSAG)) interacts with substrate.

It belongs to the class-II aminoacyl-tRNA synthetase family. As to quaternary structure, homodimer.

The protein localises to the cytoplasm. It catalyses the reaction tRNA(Gly) + glycine + ATP = glycyl-tRNA(Gly) + AMP + diphosphate. Its function is as follows. Catalyzes the attachment of glycine to tRNA(Gly). The polypeptide is Glycine--tRNA ligase (Deinococcus geothermalis (strain DSM 11300 / CIP 105573 / AG-3a)).